Consider the following 179-residue polypeptide: Large ribosomal subunit protein uL5 (179 aa).

This sequence belongs to the universal ribosomal protein uL5 family. As to quaternary structure, part of the 50S ribosomal subunit; part of the 5S rRNA/L5/L18/L25 subcomplex. Contacts the 5S rRNA and the P site tRNA. Forms a bridge to the 30S subunit in the 70S ribosome.

Functionally, this is one of the proteins that bind and probably mediate the attachment of the 5S RNA into the large ribosomal subunit, where it forms part of the central protuberance. In the 70S ribosome it contacts protein S13 of the 30S subunit (bridge B1b), connecting the 2 subunits; this bridge is implicated in subunit movement. Contacts the P site tRNA; the 5S rRNA and some of its associated proteins might help stabilize positioning of ribosome-bound tRNAs. The polypeptide is Large ribosomal subunit protein uL5 (Pectobacterium atrosepticum (strain SCRI 1043 / ATCC BAA-672) (Erwinia carotovora subsp. atroseptica)).